The following is a 251-amino-acid chain: Derlin-1 (251 aa).

Serine 2 is modified (N-acetylserine). The Cytoplasmic portion of the chain corresponds to 2 to 15 (SDIGDWFRSIPTIT). Residues 16 to 31 (RYWFAATVAVPLVGKL) traverse the membrane as a helical segment. Residues 32-69 (GLISPAYFFLWPEAFLYRFQIWRPITATFYFPVGPGTG) lie on the Lumenal side of the membrane. The chain crosses the membrane as a helical span at residues 70 to 89 (FLYLVNLYFLYQYSTRLETG). Over 90–94 (AFDGR) the chain is Cytoplasmic. Residues 95–115 (PADYLFMLLFNWICIVITGLA) traverse the membrane as a helical segment. The Lumenal portion of the chain corresponds to 116–122 (MDMQLLM). Residues 123–137 (IPLIMSVLYVWAQLN) traverse the membrane as a helical segment. Over 138 to 154 (RDMIVSFWFGTRFKACY) the chain is Cytoplasmic. Residues 155-166 (LPWVILGFNYII) form a helical membrane-spanning segment. Topologically, residues 167-170 (GGSV) are lumenal. Residues 171 to 189 (INELIGNLVGHLYFFLMFR) traverse the membrane as a helical segment. Residues 190-251 (YPMDLGGRNF…WGQGFRLGDQ (62 aa)) lie on the Cytoplasmic side of the membrane. Serine 201 is subject to Phosphoserine. A Phosphothreonine modification is found at threonine 202. Position 226 is a phosphoserine (serine 226). The tract at residues 229–251 (RAADQNGGGGRHNWGQGFRLGDQ) is disordered. Positions 241 to 248 (NWGQGFRL) match the SHP-box motif.

Belongs to the derlin family. In terms of assembly, homotetramer. The four subunits of the tetramer are arranged in a twofold symmetry. Forms homo- and heterooligomers with DERL2 and DERL3; binding to DERL3 is poorer than that between DERL2 and DERL3. Interacts (via SHP-box motif) with VCP. Interacts with AMFR, SELENOS, SEL1L, SELENOK and SYVN1, as well as with SEL1L-SYVN1 and VCP-SELENOS protein complexes; this interaction is weaker than that observed between DERL2 and these complexes. Interacts with NGLY1 and YOD1. Does not bind to EDEM1. Interacts with DNAJB9. Interacts with RNF103. Interacts with HM13. Interacts with XBP1 isoform 1 (via luminal/ectodomain domain); the interaction obviates the need for ectodomain shedding prior HM13/SPP-mediated XBP1 isoform 1 cleavage. Interacts with the signal recognition particle/SRP and the SRP receptor; in the process of endoplasmic reticulum stress-induced pre-emptive quality control. May interact with UBXN6. Interacts with ZFAND2B; probably through VCP. Interacts with CCDC47. Interacts with C18orf32. May interact with TRAM1. Forms a complex with SVIP and VCP/p97.

Its subcellular location is the endoplasmic reticulum membrane. In terms of biological role, functional component of endoplasmic reticulum-associated degradation (ERAD) for misfolded lumenal proteins. Forms homotetramers which encircle a large channel traversing the endoplasmic reticulum (ER) membrane. This allows the retrotranslocation of misfolded proteins from the ER into the cytosol where they are ubiquitinated and degraded by the proteasome. The channel has a lateral gate within the membrane which provides direct access to membrane proteins with no need to reenter the ER lumen first. May mediate the interaction between VCP and the misfolded protein. Also involved in endoplasmic reticulum stress-induced pre-emptive quality control, a mechanism that selectively attenuates the translocation of newly synthesized proteins into the endoplasmic reticulum and reroutes them to the cytosol for proteasomal degradation. By controlling the steady-state expression of the IGF1R receptor, indirectly regulates the insulin-like growth factor receptor signaling pathway. This is Derlin-1 from Bos taurus (Bovine).